The primary structure comprises 237 residues: Periplasmic deoxyribonuclease (237 aa).

The first 27 residues, 1–27, serve as a signal peptide directing secretion; it reads MSRPSRVLGLPLLSLGLTLLVSTPLQA.

The protein belongs to the EndA/NucM nuclease family.

It localises to the periplasm. Its function is as follows. Endonuclease which is capable of degrading plasmid DNA. This Aeromonas hydrophila protein is Periplasmic deoxyribonuclease (dnsH).